We begin with the raw amino-acid sequence, 100 residues long: MATVTDPRDIILAPVISEKSYGLIEDNVYTFIVHPDSNKTQIKIAIEKIFKVKVDSVNTANRQGKRKRTRSGFGQRKSTKRAIVTLAAGSKPIDLFGAPA.

The protein belongs to the universal ribosomal protein uL23 family. As to quaternary structure, part of the 50S ribosomal subunit. Contacts protein L29, and trigger factor when it is bound to the ribosome.

Functionally, one of the early assembly proteins it binds 23S rRNA. One of the proteins that surrounds the polypeptide exit tunnel on the outside of the ribosome. Forms the main docking site for trigger factor binding to the ribosome. The sequence is that of Large ribosomal subunit protein uL23 from Mycobacterium sp. (strain JLS).